We begin with the raw amino-acid sequence, 382 residues long: D-galactonate dehydratase (382 aa).

Asp183 lines the Mg(2+) pocket. Catalysis depends on His185, which acts as the Proton donor. Mg(2+) is bound by residues Glu209 and Glu235. His285 functions as the Proton acceptor in the catalytic mechanism.

The protein belongs to the mandelate racemase/muconate lactonizing enzyme family. GalD subfamily. The cofactor is Mg(2+).

It carries out the reaction D-galactonate = 2-dehydro-3-deoxy-D-galactonate + H2O. The protein operates within carbohydrate acid metabolism; D-galactonate degradation; D-glyceraldehyde 3-phosphate and pyruvate from D-galactonate: step 1/3. In terms of biological role, catalyzes the dehydration of D-galactonate to 2-keto-3-deoxy-D-galactonate. In Cronobacter sakazakii (strain ATCC BAA-894) (Enterobacter sakazakii), this protein is D-galactonate dehydratase.